A 185-amino-acid polypeptide reads, in one-letter code: Photosystem I assembly protein Ycf4 (185 aa).

2 consecutive transmembrane segments (helical) span residues 20-40 (GNFFWACILFLGSLGFLAVGA) and 57-77 (ILFFPQGVVMSFYGIAGLFIS).

Belongs to the Ycf4 family.

Its subcellular location is the plastid. It is found in the chloroplast thylakoid membrane. Seems to be required for the assembly of the photosystem I complex. The chain is Photosystem I assembly protein Ycf4 from Oryza nivara (Indian wild rice).